The following is a 699-amino-acid chain: Elongation factor G (699 aa).

Residues 8–288 form the tr-type G domain; it reads EDYRNFGIMA…AVVDYLPSPM (281 aa). GTP is bound by residues 17–24, 86–90, and 140–143; these read AHIDAGKT, DTPGH, and NKMD.

Belongs to the TRAFAC class translation factor GTPase superfamily. Classic translation factor GTPase family. EF-G/EF-2 subfamily.

It localises to the cytoplasm. In terms of biological role, catalyzes the GTP-dependent ribosomal translocation step during translation elongation. During this step, the ribosome changes from the pre-translocational (PRE) to the post-translocational (POST) state as the newly formed A-site-bound peptidyl-tRNA and P-site-bound deacylated tRNA move to the P and E sites, respectively. Catalyzes the coordinated movement of the two tRNA molecules, the mRNA and conformational changes in the ribosome. In Rhizobium leguminosarum bv. trifolii (strain WSM2304), this protein is Elongation factor G.